A 402-amino-acid polypeptide reads, in one-letter code: Zinc finger CCHC domain-containing protein 12 (402 aa).

Positions 268–277 (DTPDDSDEDV) are enriched in acidic residues. Residues 268-342 (DTPDDSDEDV…PGNMRRTRKR (75 aa)) form a disordered region. A compositionally biased stretch (polar residues) spans 311-323 (SPNNSQFPSPCTS). Residues 346-363 (IRCSYCGEEGHSKETCDN) form a CCHC-type zinc finger. Basic and acidic residues predominate over residues 383–392 (HTEERSREAP). Positions 383-402 (HTEERSREAPVEPSDPCELQ) are disordered.

Belongs to the ZCCHC12 family. Interacts with SMAD1 and CREB-binding protein (CBP). Forms a protein-DNA complex through its association with SMAD1.

In terms of biological role, transcriptional coactivator in the bone morphogenetic protein (BMP)-signaling pathway. It positively modulates BMP signaling by interacting with SMAD1 and associating with CBP in the transcription complex. It contributes to the BMP-induced enhancement of cholinergic-neuron-specific gene expression. This is Zinc finger CCHC domain-containing protein 12 (ZCCHC12) from Bos taurus (Bovine).